A 259-amino-acid polypeptide reads, in one-letter code: MIDPVAIQIGPFAIHWYALCIMTGLVLAVYLSSKEAPRKKMTSDDVIDFIIIAFPIAIIGARLYYVIFEWSYYSKHLNELLAIWNGGIAIYGGLITGAIVLFIYCYYKVLNPIRFLDIIAPGVMLAQAIGRWGNFINQEAYGRVVKALPYLPSFIQKQMFIDGHYRMPTFLFESVWNIIGFTIICYLRRQKKLLLEGEVLAFYLIWYGIGRFVIEGMRTDSLIFIGLRVSQIVSIVLIILGIVFVILRRRQKGIPYYQE.

4 helical membrane passes run I9–V29, I47–I67, I83–I103, and V109–I129. Residue R131 participates in a 1,2-diacyl-sn-glycero-3-phospho-(1'-sn-glycerol) binding. 3 helical membrane-spanning segments follow: residues M167 to L187, L194 to I214, and L227 to L247.

It belongs to the Lgt family.

The protein resides in the cell membrane. The enzyme catalyses L-cysteinyl-[prolipoprotein] + a 1,2-diacyl-sn-glycero-3-phospho-(1'-sn-glycerol) = an S-1,2-diacyl-sn-glyceryl-L-cysteinyl-[prolipoprotein] + sn-glycerol 1-phosphate + H(+). The protein operates within protein modification; lipoprotein biosynthesis (diacylglyceryl transfer). In terms of biological role, catalyzes the transfer of the diacylglyceryl group from phosphatidylglycerol to the sulfhydryl group of the N-terminal cysteine of a prolipoprotein, the first step in the formation of mature lipoproteins. This chain is Phosphatidylglycerol--prolipoprotein diacylglyceryl transferase, found in Streptococcus uberis (strain ATCC BAA-854 / 0140J).